The primary structure comprises 97 residues: Non-pathogenic pore-forming peptide amoebapore A (97 aa).

An N-terminal signal peptide occupies residues 1–20 (MKAIVFVLIFAVAFAVTLRQ). Residues 21–97 (GPIVCNLCTG…NAICAKIHAC (77 aa)) enclose the Saposin B-type domain. 3 cysteine pairs are disulfide-bonded: C25/C97, C28/C91, and C55/C66.

As to quaternary structure, monomer. Homodimer. Hexamer; formed during insertion in the membrane.

Its subcellular location is the cytoplasmic granule. In terms of biological role, forms pores in the cell membrane of host cells. Implicated in the cytolytic activity of the parasite. Pore forming activity is lower compared to the activity of ameobapore A from the pathogenic strain HM-1:IMSS. This Entamoeba histolytica protein is Non-pathogenic pore-forming peptide amoebapore A.